Reading from the N-terminus, the 244-residue chain is Inactive chemokine-binding protein (244 aa).

The tract at residues 1-79 is disordered; sequence MHVPASLQQS…STSVEDVDPP (79 aa). Residues 37 to 53 are compositionally biased toward polar residues; sequence QDQTPTNDKICQSVTEI. Residues 54–77 show a composition bias toward acidic residues; that stretch reads TESESDPDPEVESEDDSTSVEDVD.

Belongs to the orthopoxvirus OPG001 family.

It is found in the host cytoplasm. Functionally, the protein is truncated in this vaccinal strain and presumably inactive, because the lack of signal peptide prevents the protein of being secreted. In the wild-type viruses inhibits host immune defense by binding to host chemokines. Binds host CC chemokines (beta chemokines) such as RANTES with high affinity, but not CXC or C chemokines (alpha and gamma chemokines). The chain is Inactive chemokine-binding protein (OPG001) from Vaccinia virus (strain Western Reserve) (VACV).